The chain runs to 241 residues: Zinc finger CCHC domain-containing protein 17 (241 aa).

Residues 16–88 enclose the S1 motif domain; sequence YTIFQGEVAM…DRIKVSLSMK (73 aa). Phosphoserine is present on Ser-114. The segment at 131–148 adopts a CCHC-type zinc-finger fold; that stretch reads TTCKKCGCKGHFAKDCFM. Lys-144 carries the post-translational modification N6-acetyllysine. The interval 161–241 is disordered; it reads EEEEKEEAKS…KKKHKKKHKE (81 aa). Over residues 166–178 the composition is skewed to basic and acidic residues; sequence EEAKSAEFEKPDP. Positions 182-198 are enriched in basic residues; it reads PSRKRKKEKKKKKHRDR. Ser-183 carries the post-translational modification Phosphoserine. A compositionally biased stretch (basic and acidic residues) spans 211 to 225; sequence DTGKRARHTSKDSKA. Residues 226–241 show a composition bias toward basic residues; that stretch reads AKKKKKKKKHKKKHKE.

Interacts with PNN. Associates with the 60S ribosomal subunit.

The protein localises to the nucleus. It is found in the nucleolus. The sequence is that of Zinc finger CCHC domain-containing protein 17 (ZCCHC17) from Homo sapiens (Human).